The chain runs to 577 residues: Sulfite reductase [NADPH] hemoprotein beta-component (577 aa).

[4Fe-4S] cluster contacts are provided by Cys-436, Cys-442, Cys-481, and Cys-485. Cys-485 lines the siroheme pocket.

It belongs to the nitrite and sulfite reductase 4Fe-4S domain family. Alpha(8)-beta(8). The alpha component is a flavoprotein, the beta component is a hemoprotein. Siroheme is required as a cofactor. Requires [4Fe-4S] cluster as cofactor.

It carries out the reaction hydrogen sulfide + 3 NADP(+) + 3 H2O = sulfite + 3 NADPH + 4 H(+). The protein operates within sulfur metabolism; hydrogen sulfide biosynthesis; hydrogen sulfide from sulfite (NADPH route): step 1/1. Component of the sulfite reductase complex that catalyzes the 6-electron reduction of sulfite to sulfide. This is one of several activities required for the biosynthesis of L-cysteine from sulfate. In Shewanella woodyi (strain ATCC 51908 / MS32), this protein is Sulfite reductase [NADPH] hemoprotein beta-component.